We begin with the raw amino-acid sequence, 200 residues long: HTH-type transcriptional regulator BetI (200 aa).

An HTH tetR-type domain is found at 8–68 (SIRKQQLIQA…AAMRHIQYQL (61 aa)). The H-T-H motif DNA-binding region spans 31–50 (SIALIARKAGVSNGIISHYF).

The protein operates within amine and polyamine biosynthesis; betaine biosynthesis via choline pathway [regulation]. Functionally, repressor involved in the biosynthesis of the osmoprotectant glycine betaine. It represses transcription of the choline transporter BetT and the genes of BetAB involved in the synthesis of glycine betaine. This is HTH-type transcriptional regulator BetI from Proteus mirabilis (strain HI4320).